A 414-amino-acid chain; its full sequence is Serine hydroxymethyltransferase (414 aa).

(6S)-5,6,7,8-tetrahydrofolate is bound by residues Leu117 and 121–123 (GHL). Lys226 carries the post-translational modification N6-(pyridoxal phosphate)lysine. 349 to 351 (SPF) is a (6S)-5,6,7,8-tetrahydrofolate binding site.

Belongs to the SHMT family. In terms of assembly, homodimer. Requires pyridoxal 5'-phosphate as cofactor.

The protein resides in the cytoplasm. The enzyme catalyses (6R)-5,10-methylene-5,6,7,8-tetrahydrofolate + glycine + H2O = (6S)-5,6,7,8-tetrahydrofolate + L-serine. Its pathway is one-carbon metabolism; tetrahydrofolate interconversion. It functions in the pathway amino-acid biosynthesis; glycine biosynthesis; glycine from L-serine: step 1/1. Catalyzes the reversible interconversion of serine and glycine with tetrahydrofolate (THF) serving as the one-carbon carrier. This reaction serves as the major source of one-carbon groups required for the biosynthesis of purines, thymidylate, methionine, and other important biomolecules. Also exhibits THF-independent aldolase activity toward beta-hydroxyamino acids, producing glycine and aldehydes, via a retro-aldol mechanism. The sequence is that of Serine hydroxymethyltransferase from Desulfovibrio desulfuricans (strain ATCC 27774 / DSM 6949 / MB).